Here is a 1085-residue protein sequence, read N- to C-terminus: Tudor domain-containing protein 7B (1085 aa).

One can recognise an HTH OST-type 1 domain in the interval Asp-3–Thr-76. Disordered regions lie at residues Ala-112–Arg-183, Arg-200–Tyr-228, and Pro-297–Ser-341. Positions Gln-203 to Thr-216 are enriched in polar residues. The HTH OST-type 2 domain occupies Ser-229–Lys-299. The span at Thr-322–Glu-335 shows a compositional bias: polar residues. The region spanning Leu-340–Val-410 is the HTH OST-type 3 domain. Tudor domains are found at residues Ser-496 to Leu-554 and Arg-686 to Asp-743. Positions Asn-843 to Leu-853 are enriched in polar residues. Residues Asn-843 to Leu-888 are disordered.

The protein resides in the cytoplasm. Component of specific cytoplasmic RNA granules involved in post-transcriptional regulation of specific genes: probably acts by binding to specific mRNAs and regulating their translation. Probably required during spermatogenesis. The polypeptide is Tudor domain-containing protein 7B (tdrd7b) (Danio rerio (Zebrafish)).